The sequence spans 202 residues: Histone chaperone ASF1B (202 aa).

Residues 1 to 156 form an interaction with histone H3 and CHAF1B region; the sequence is MAKVSVLNVA…TRFHINWDNN (156 aa). Ser-198 bears the Phosphoserine; by TLK2 mark.

It belongs to the ASF1 family. As to quaternary structure, interacts with histone H3 (via C-terminus), including histone H3.1, H3.2 and H3.3, and histone H4; the interaction with H3 is direct. Interacts with the CHAF1A, CHAF1B and RBBP4 subunits of the CAF-1 complex. Interacts with HAT1, NASP and TAF1. Found in a soluble complex with NASP and histones H3 and H4; the interaction with NASP is probably indirect and mediated by H3-H4. Interacts with CDAN1. Found in a cytosolic complex with CDAN1, ASF1A, IPO4 and histones H3.1 and H4. Interacts with CREBBP. Phosphorylated by TLK2. Phosphorylated by TLK1. As to expression, highly expressed in germ cells. Restricted to premeiotic to meiotic stages during spermatogenesis.

The protein localises to the nucleus. The protein resides in the cytoplasm. It localises to the cytosol. Functionally, histone chaperone that facilitates histone deposition and histone exchange and removal during nucleosome assembly and disassembly. Cooperates with chromatin assembly factor 1 (CAF-1) to promote replication-dependent chromatin assembly. Also involved in the nuclear import of the histone H3-H4 dimer together with importin-4 (IPO4): specifically recognizes and binds newly synthesized histones with the monomethylation of H3 'Lys-9' (H3K9me1) and diacetylation at 'Lys-5' and 'Lys-12' of H4 (H4K5ac and H4K12ac) marks in the cytosol. Does not participate in replication-independent nucleosome deposition which is mediated by ASF1A and HIRA. Required for gonad development. The protein is Histone chaperone ASF1B of Mus musculus (Mouse).